The primary structure comprises 217 residues: Urease accessory protein UreE (217 aa).

The tract at residues 148 to 217 (AYGEAAAHGH…DHDHGSGHHH (70 aa)) is disordered. Residues 160–171 (AGHDHAHDHDHG) show a composition bias toward basic and acidic residues. The segment covering 193–202 (AAAPAPHVHG) has biased composition (low complexity). The span at 206-217 (GHDHDHGSGHHH) shows a compositional bias: basic and acidic residues.

The protein belongs to the UreE family.

It is found in the cytoplasm. Its function is as follows. Involved in urease metallocenter assembly. Binds nickel. Probably functions as a nickel donor during metallocenter assembly. The sequence is that of Urease accessory protein UreE from Methylibium petroleiphilum (strain ATCC BAA-1232 / LMG 22953 / PM1).